The following is a 301-amino-acid chain: MPIIIDKDLPARKVLQEENIFVMTKERAETQDIRALKIAILNLMPTKQETEAQLLRLIGNTPLQLDVHLLHMESHLSRNVAQEHLTSFYKTFRDIENEKFDGLIITGAPVETLSFEEVDYWEELKRIMEYSKTNVTSTLHICWGAQAGLYHHYGVQKYPLKEKMFGVFEHEVREQHVKLLQGFDELFFAPHSRHTEVRESDIRGVKELTLLANSEEAGVHLVIGPEGRQVFALGHSEYSCDTLKQEYERDRQKGLNIDVPKNYFKHNNPNEKPLVRWRSHGNLLFSNWLNYYVYQETPYVL.

The Acyl-thioester intermediate role is filled by cysteine 142. The substrate site is built by lysine 163 and serine 192. Residue histidine 235 is the Proton acceptor of the active site. Glutamate 237 is a catalytic residue. Residue arginine 249 participates in substrate binding.

This sequence belongs to the MetA family.

The protein resides in the cytoplasm. It carries out the reaction L-homoserine + acetyl-CoA = O-acetyl-L-homoserine + CoA. It participates in amino-acid biosynthesis; L-methionine biosynthesis via de novo pathway; O-acetyl-L-homoserine from L-homoserine: step 1/1. Functionally, transfers an acetyl group from acetyl-CoA to L-homoserine, forming acetyl-L-homoserine. The protein is Homoserine O-acetyltransferase of Bacillus thuringiensis subsp. konkukian (strain 97-27).